Reading from the N-terminus, the 432-residue chain is Adenylosuccinate synthetase (432 aa).

GTP contacts are provided by residues 13–19 (GDEGKGK) and 41–43 (GHT). Aspartate 14 acts as the Proton acceptor in catalysis. Mg(2+) contacts are provided by aspartate 14 and glycine 41. IMP contacts are provided by residues 14-17 (DEGK), 39-42 (NAGH), threonine 130, arginine 144, glutamine 225, threonine 240, and arginine 304. Catalysis depends on histidine 42, which acts as the Proton donor. Residue 300-306 (ATTGRRR) participates in substrate binding. Residues arginine 306, 332 to 334 (KLD), and 415 to 417 (STG) contribute to the GTP site.

This sequence belongs to the adenylosuccinate synthetase family. As to quaternary structure, homodimer. It depends on Mg(2+) as a cofactor.

The protein resides in the cytoplasm. It carries out the reaction IMP + L-aspartate + GTP = N(6)-(1,2-dicarboxyethyl)-AMP + GDP + phosphate + 2 H(+). The protein operates within purine metabolism; AMP biosynthesis via de novo pathway; AMP from IMP: step 1/2. Functionally, plays an important role in the de novo pathway of purine nucleotide biosynthesis. Catalyzes the first committed step in the biosynthesis of AMP from IMP. In Salmonella paratyphi A (strain AKU_12601), this protein is Adenylosuccinate synthetase.